The following is a 622-amino-acid chain: MSVSTPSELDALIEQATSESIPNGDLDLPIALEISDVLRSRRVNPKDSMRCIKKRILNTADNPNTQLSSWKLTNICVKNGGTPFIKEICSREFMDTMEHVILREDSNEELSELVKTILYELYVAFKNDSQLNYVAKVYDKLISRGIKFPEKLTLSNSPTAMFDSKTPADWIDSDACMICSKKFSLLNRKHHCRSCGGVFCQEHSSNSIPLPDLGIYEPVRVCDSCFEDYDLKRHDDSKKSKKHRHKRKKDRDYSTPEDEEELIRKAIELSLKESRNSASSEPIVPVVESKNEVKRQEIEEEEDPDLKAAIQESLREAEEAKLRSERQKASRQMQPQQPSPQPQPIHSVDLSDEEKDSIYMFASLVEKMKSRPLNEILEDSKLQNLAQRVFASKARLNYALNDKAQKYNTLIEMNGKISEIMNIYDRLLEQQLQSINLSQQYTLPQVPSDPYNYLTENVQNPAESYQTPPLQQLSSHQYKPQQDVSRQQSVKANSSPTTNIDHLKTIDVTPHAQQKPQSHVELAPSDPPYPKEEAEDEGTQAVQDEESSTQESRERPYPVETENGETSINKRPQGITRYDFPTVPARKFVQPESTVPLPASSSEIPIKEERPPSPQEELLIEL.

In terms of domain architecture, VHS spans 18–149 (SESIPNGDLD…KLISRGIKFP (132 aa)). Position 157 is a phosphoserine (Ser-157). The FYVE-type; atypical zinc-finger motif lies at 170–230 (WIDSDACMIC…VCDSCFEDYD (61 aa)). Zn(2+) is bound by residues Cys-176, Cys-179, Cys-192, Cys-195, Cys-200, His-203, Cys-222, and Cys-225. The segment at 236-260 (DSKKSKKHRHKRKKDRDYSTPEDEE) is disordered. Residues 239–249 (KSKKHRHKRKK) are compositionally biased toward basic residues. The 20-residue stretch at 258 to 277 (DEEELIRKAIELSLKESRNS) folds into the UIM 1 domain. Residue Lys-294 forms a Glycyl lysine isopeptide (Lys-Gly) (interchain with G-Cter in ubiquitin) linkage. Residues 301 to 320 (EEDPDLKAAIQESLREAEEA) enclose the UIM 2 domain. Over residues 317–328 (AEEAKLRSERQK) the composition is skewed to basic and acidic residues. 2 disordered regions span residues 317–348 (AEEA…IHSV) and 462–622 (AESY…LIEL). Residues 462–500 (AESYQTPPLQQLSSHQYKPQQDVSRQQSVKANSSPTTNI) show a composition bias toward polar residues. Residue Ser-495 is modified to Phosphoserine. Positions 533-548 (EAEDEGTQAVQDEESS) are enriched in acidic residues. Ser-613 bears the Phosphoserine mark.

The protein belongs to the VPS27 family. Component of the ESCRT-0 complex composed of HSE1 and VPS27. Interacts with ENT3 and ENT5, the ESCRT-I subunits VPS23 and VPS28 and with the COPIb subunits SEC27, SEC28 and SEC33. May form a complex composed of VPS27, HSE1 and DOA1. Interacts with DOA1. Interacts with ubiquitin.

The protein resides in the endosome membrane. Component of the ESCRT-0 complex which is the sorting receptor for ubiquitinated cargo proteins at the multivesicular body (MVB) and recruits ESCRT-I to the MVB outer membrane. Controls exit from the prevacuolar compartment (PVC) in both the forward direction to the vacuole and the return to the Golgi. Allows VPS10 to return to the (trans-Golgi network) TGN from the PVC. Might also function as an alternate adapter in the COPIb clathrin-like coat. This is Vacuolar protein sorting-associated protein 27 (VPS27) from Saccharomyces cerevisiae (strain ATCC 204508 / S288c) (Baker's yeast).